A 73-amino-acid polypeptide reads, in one-letter code: MFGLGAPELILILILALIIFGPGKLPEVGRALGKGIREFKNATNSVTEEIKEAAKIDDGNNNSDKEKATRQAS.

The helical transmembrane segment at 1 to 21 (MFGLGAPELILILILALIIFG) threads the bilayer. The tract at residues 52–73 (EAAKIDDGNNNSDKEKATRQAS) is disordered.

The protein belongs to the TatA/E family. As to quaternary structure, forms a complex with TatC.

The protein resides in the cell membrane. Part of the twin-arginine translocation (Tat) system that transports large folded proteins containing a characteristic twin-arginine motif in their signal peptide across membranes. TatA could form the protein-conducting channel of the Tat system. The polypeptide is Sec-independent protein translocase protein TatA (Moorella thermoacetica (strain ATCC 39073 / JCM 9320)).